We begin with the raw amino-acid sequence, 634 residues long: DNA-directed RNA polymerase subunit gamma (634 aa).

Residues Cys-74, Cys-76, Cys-89, and Cys-92 each coordinate Zn(2+). Positions 471, 473, and 475 each coordinate Mg(2+).

Belongs to the RNA polymerase beta' chain family. RpoC1 subfamily. In cyanobacteria the RNAP catalytic core is composed of 2 alpha, 1 beta, 1 beta', 1 gamma and 1 omega subunit. When a sigma factor is associated with the core the holoenzyme is formed, which can initiate transcription. Mg(2+) is required as a cofactor. Zn(2+) serves as cofactor.

It catalyses the reaction RNA(n) + a ribonucleoside 5'-triphosphate = RNA(n+1) + diphosphate. In terms of biological role, DNA-dependent RNA polymerase catalyzes the transcription of DNA into RNA using the four ribonucleoside triphosphates as substrates. The sequence is that of DNA-directed RNA polymerase subunit gamma from Synechococcus sp. (strain CC9311).